Reading from the N-terminus, the 997-residue chain is Sorting nexin-19 (997 aa).

The PXA domain maps to 95 to 273; it reads ERQLEQEINR…ILVSIFSKYR (179 aa). Disordered stretches follow at residues 313 to 333 and 413 to 437; these read SSPATAPVHLTSSEPAPSPEI and GALEPKDGEGSECMEGAEAEEAPGT. Residues 422–435 show a composition bias toward acidic residues; the sequence is GSECMEGAEAEEAP. The PX domain maps to 538-668; it reads LRITGTITAR…EFLALNTDAR (131 aa). Arg-587 and Arg-634 together coordinate a 1,2-diacyl-sn-glycero-3-phospho-(1D-myo-inositol-3-phosphate). A disordered region spans residues 697–728; that stretch reads FPRSEPQSPTEELSEAENESKPQTEGKKASKS. The span at 714–724 shows a compositional bias: basic and acidic residues; sequence NESKPQTEGKK.

Belongs to the sorting nexin family. As to quaternary structure, interacts with PTPRN.

It is found in the early endosome membrane. The protein resides in the cytoplasmic vesicle membrane. Plays a role in intracellular vesicle trafficking and exocytosis. May play a role in maintaining insulin-containing dense core vesicles in pancreatic beta-cells and in preventing their degradation. May play a role in insulin secretion. Interacts with membranes containing phosphatidylinositol 3-phosphate (PtdIns(3P)). The protein is Sorting nexin-19 of Mus musculus (Mouse).